A 600-amino-acid polypeptide reads, in one-letter code: Adenine deaminase (600 aa).

Belongs to the metallo-dependent hydrolases superfamily. Adenine deaminase family. It depends on Mn(2+) as a cofactor.

The catalysed reaction is adenine + H2O + H(+) = hypoxanthine + NH4(+). The sequence is that of Adenine deaminase from Roseobacter denitrificans (strain ATCC 33942 / OCh 114) (Erythrobacter sp. (strain OCh 114)).